A 157-amino-acid polypeptide reads, in one-letter code: Serine-protein kinase RsbW (157 aa).

It belongs to the anti-sigma-factor family.

It carries out the reaction L-seryl-[protein] + ATP = O-phospho-L-seryl-[protein] + ADP + H(+). It catalyses the reaction L-threonyl-[protein] + ATP = O-phospho-L-threonyl-[protein] + ADP + H(+). In terms of biological role, negative regulator of sigma-B activity. Phosphorylates and inactivates its specific antagonist protein, RsbV. Upon phosphorylation of RsbV, RsbW is released and binds to sigma-B, thereby blocking its ability to form an RNA polymerase holoenzyme (E-sigma-B). In Listeria monocytogenes serovar 1/2a (strain ATCC BAA-679 / EGD-e), this protein is Serine-protein kinase RsbW.